Consider the following 421-residue polypeptide: ATP-dependent RNA helicase RhlB (421 aa).

Residues 9–37 (QKFSDFALHPQVVEALEKKGFYNCTPIQA) carry the Q motif motif. The Helicase ATP-binding domain maps to 40 to 219 (LPLTLAGRDV…FEQMNNAEYV (180 aa)). 53 to 60 (AQTGTGKT) provides a ligand contact to ATP. The DEAD box motif lies at 165–168 (DEAD). In terms of domain architecture, Helicase C-terminal spans 245-390 (RLLQTLIEEE…VSKYNPEALM (146 aa)). The tract at residues 396–421 (PLRLTRSRPGNGPRRAGAPRNRRRSG) is disordered. A compositionally biased stretch (low complexity) spans 402–414 (SRPGNGPRRAGAP).

It belongs to the DEAD box helicase family. RhlB subfamily. Component of the RNA degradosome, which is a multiprotein complex involved in RNA processing and mRNA degradation.

The protein localises to the cytoplasm. The enzyme catalyses ATP + H2O = ADP + phosphate + H(+). Functionally, DEAD-box RNA helicase involved in RNA degradation. Has RNA-dependent ATPase activity and unwinds double-stranded RNA. This chain is ATP-dependent RNA helicase RhlB, found in Salmonella paratyphi A (strain AKU_12601).